Reading from the N-terminus, the 145-residue chain is uncharacterized protein (145 aa).

3 helical membrane passes run 3 to 23, 83 to 103, and 105 to 125; these read VGII…GIGG, YVID…YLVP, and LSLL…MLWI.

Its subcellular location is the cell membrane. This is an uncharacterized protein from Methanocaldococcus jannaschii (strain ATCC 43067 / DSM 2661 / JAL-1 / JCM 10045 / NBRC 100440) (Methanococcus jannaschii).